Consider the following 90-residue polypeptide: Co-chaperonin GroES (90 aa).

This sequence belongs to the GroES chaperonin family. Heptamer of 7 subunits arranged in a ring. Interacts with the chaperonin GroEL.

The protein localises to the cytoplasm. Its function is as follows. Together with the chaperonin GroEL, plays an essential role in assisting protein folding. The GroEL-GroES system forms a nano-cage that allows encapsulation of the non-native substrate proteins and provides a physical environment optimized to promote and accelerate protein folding. GroES binds to the apical surface of the GroEL ring, thereby capping the opening of the GroEL channel. In Thermosipho africanus (strain TCF52B), this protein is Co-chaperonin GroES.